Here is a 549-residue protein sequence, read N- to C-terminus: Glucose-6-phosphate isomerase (549 aa).

Glu-355 (proton donor) is an active-site residue. Active-site residues include His-386 and Lys-514.

This sequence belongs to the GPI family.

The protein resides in the cytoplasm. The enzyme catalyses alpha-D-glucose 6-phosphate = beta-D-fructose 6-phosphate. The protein operates within carbohydrate biosynthesis; gluconeogenesis. Its pathway is carbohydrate degradation; glycolysis; D-glyceraldehyde 3-phosphate and glycerone phosphate from D-glucose: step 2/4. In terms of biological role, catalyzes the reversible isomerization of glucose-6-phosphate to fructose-6-phosphate. The chain is Glucose-6-phosphate isomerase from Salmonella gallinarum (strain 287/91 / NCTC 13346).